A 458-amino-acid chain; its full sequence is ATP synthase subunit beta 2 (458 aa).

Position 148-155 (148-155 (GGAGVGKT)) interacts with ATP.

The protein belongs to the ATPase alpha/beta chains family. As to quaternary structure, F-type ATPases have 2 components, CF(1) - the catalytic core - and CF(0) - the membrane proton channel. CF(1) has five subunits: alpha(3), beta(3), gamma(1), delta(1), epsilon(1). CF(0) has three main subunits: a(1), b(2) and c(9-12). The alpha and beta chains form an alternating ring which encloses part of the gamma chain. CF(1) is attached to CF(0) by a central stalk formed by the gamma and epsilon chains, while a peripheral stalk is formed by the delta and b chains.

Its subcellular location is the cell inner membrane. It carries out the reaction ATP + H2O + 4 H(+)(in) = ADP + phosphate + 5 H(+)(out). Its function is as follows. Produces ATP from ADP in the presence of a proton gradient across the membrane. The catalytic sites are hosted primarily by the beta subunits. The protein is ATP synthase subunit beta 2 of Marinomonas sp. (strain MWYL1).